Consider the following 956-residue polypeptide: Valine--tRNA ligase (956 aa).

The short motif at 43–53 (PNITGNLHIGH) is the 'HIGH' region element. The short motif at 556–560 (KMSKS) is the 'KMSKS' region element. Lysine 559 serves as a coordination point for ATP. Positions 889–920 (PKEKELKNLNKEISKIQLAINKLQQRLSNEEF) form a coiled coil.

The protein belongs to the class-I aminoacyl-tRNA synthetase family. ValS type 1 subfamily. As to quaternary structure, monomer.

Its subcellular location is the cytoplasm. The catalysed reaction is tRNA(Val) + L-valine + ATP = L-valyl-tRNA(Val) + AMP + diphosphate. In terms of biological role, catalyzes the attachment of valine to tRNA(Val). As ValRS can inadvertently accommodate and process structurally similar amino acids such as threonine, to avoid such errors, it has a 'posttransfer' editing activity that hydrolyzes mischarged Thr-tRNA(Val) in a tRNA-dependent manner. The chain is Valine--tRNA ligase from Buchnera aphidicola subsp. Baizongia pistaciae (strain Bp).